We begin with the raw amino-acid sequence, 647 residues long: TNFAIP3-interacting protein 1 (647 aa).

Positions 39 to 72 (MQGIKMLGELLEESQMEASRLRQKAEELVKDSEL) form a coiled coil. Residues 61–71 (QKAEELVKDSE) show a composition bias toward basic and acidic residues. Residues 61–168 (QKAEELVKDS…DLGPPPPEDS (108 aa)) are disordered. Position 77 is a phosphoserine (serine 77). Residues 95–425 (TKVQVHPATS…SPLTRQREYQ (331 aa)) form an interaction with Nef region. Residues 102–115 (ATSTAATTTATATT) show a composition bias toward low complexity. A compositionally biased stretch (polar residues) spans 143–155 (EEQNSPETGSHPT). Residues 209–270 (SKVHKNEQRT…KKLLMNSSCK (62 aa)) are a coiled coil. A phosphoserine mark is found at serine 297, serine 416, and serine 455. A coiled-coil region spans residues 311 to 551 (AAEKKVKLLE…KASGERYHME (241 aa)). Residues 444 to 601 (ASPSSPPAAF…MEHPPPHPNS (158 aa)) form a required for inhibitory activity of TNF-induced NF-kappa-B activation region. A ubiquitin-binding domain (UBD) region spans residues 465–523 (KQELVTQNELLKQQVKIFEEDFQRERSDRERMNEEKEELKKQVEKLQAQVTLTNAQLKT). A Nuclear localization signal motif is present at residues 537 to 543 (QKRKAKA). The residue at position 565 (tyrosine 565) is a Phosphotyrosine. At arginine 584 the chain carries Asymmetric dimethylarginine. Arginine 612 carries the post-translational modification Asymmetric dimethylarginine; alternate. Arginine 612 carries the omega-N-methylarginine; alternate modification. The interval 613 to 647 (PPCAGIRNQSSQVMDPPPDRPAEPESADNDCDGPQ) is disordered. Acidic residues predominate over residues 637-647 (ESADNDCDGPQ). Residue serine 638 is modified to Phosphoserine.

Interacts with TNFAIP3 and IKBKG (polyubiquitinated); facilitates TNFAIP3-mediated de-ubiquitination of NEMO/IKBKG. Interacts with polyubiquitin. Interacts with MAPK1, SELPLG and PIK3CD. Interacts with IRAK1 (polyubiquitinated). Interacts with MYD88; the interaction is indicative for participation in an activated TLR-signaling complex. Interacts with TAX1BP1. Post-translationally, phosphorylation at Tyr-565 by SRC-family kinases recruits phosphoinositide-3-kinase (PI3K) PIK3CD:p85 heterodimer which results in integrin activation and leukocyte adhesion to activated endothelium during inflammation. Ubiquitous. Abundant in heart and skeletal muscle and expressed at lower levels in thymus, liver, kidney, brain and intestinal tract.

The protein localises to the cytoplasm. The protein resides in the nucleus. Inhibits NF-kappa-B activation and TNF-induced NF-kappa-B-dependent gene expression by regulating TAX1BP1 and A20/TNFAIP3-mediated deubiquitination of IKBKG; proposed to link A20/TNFAIP3 to ubiquitinated IKBKG. Involved in regulation of EGF-induced ERK1/ERK2 signaling pathway; blocks MAPK3/MAPK1 nuclear translocation and MAPK1-dependent transcription. Increases cell surface CD4(T4) antigen expression. Involved in the anti-inflammatory response of macrophages and positively regulates TLR-induced activation of CEBPB. Involved in the prevention of autoimmunity; this function implicates binding to polyubiquitin. Involved in leukocyte integrin activation during inflammation; this function is mediated by association with SELPLG and dependent on phosphorylation by SRC-family kinases. The protein is TNFAIP3-interacting protein 1 (Tnip1) of Mus musculus (Mouse).